The sequence spans 772 residues: Delta-like protein A (772 aa).

The first 20 residues, 1-20, serve as a signal peptide directing secretion; that stretch reads MGRHLLLLLFSILYMLLCQA. The Extracellular portion of the chain corresponds to 21–536; that stretch reads SSSGVFELKL…SQIASDVPWT (516 aa). The DSL domain maps to 179 to 223; that stretch reads FVCDEHYYGEGCSVFCRPRDDAFGHFTCGERGEIICDAGWKGQYC. Cystine bridges form between Cys-181–Cys-190, Cys-194–Cys-206, Cys-214–Cys-223, Cys-228–Cys-239, Cys-232–Cys-245, Cys-259–Cys-270, Cys-265–Cys-276, Cys-278–Cys-287, Cys-294–Cys-306, Cys-300–Cys-316, Cys-318–Cys-327, Cys-334–Cys-345, Cys-339–Cys-354, Cys-356–Cys-365, Cys-372–Cys-383, Cys-377–Cys-393, Cys-395–Cys-404, Cys-411–Cys-422, Cys-416–Cys-431, Cys-433–Cys-442, Cys-449–Cys-460, Cys-454–Cys-469, Cys-471–Cys-480, Cys-487–Cys-498, Cys-492–Cys-507, and Cys-509–Cys-518. EGF-like domains lie at 225 to 257, 257 to 288, and 290 to 328; these read EPICLPGCDEEHGFCEKPGECKCRVGFKGRYCD, DECIRYPGCLHGTCQQPWQCNCQEGWGGLFCN, and DLNYCTHHKPCLNGATCSNTGQGSYTCSCRPGFSGASCE. One can recognise an EGF-like 4; calcium-binding domain in the interval 330-366; it reads EVNECTGNPCRNGGSCTDMENTYSCTCPPGFYGKNCE. EGF-like domains lie at 368 to 405, 407 to 443, 445 to 481, and 483 to 519; these read SAMTCADGPCFNGGRCADNPDGGYFCQCPTGYAGFNCE, KIDHCSSSPCSNGARCVDLVNSYLCQCPDGFTGMNCD, AGDECSMYPCQNGGTCQEGASGYMCTCPPGYTGRNCS, and PVSRCQHNPCHNGATCHERNNRYVCACVSGYGGRNCQ. A glycan (N-linked (GlcNAc...) asparagine) is linked at Asn-479. The helical transmembrane segment at 537–557 threads the bilayer; sequence AVGSGVLLVLLLVVACAVVVV. At 558-772 the chain is on the cytoplasmic side; sequence CVRSKVQQRR…KDECVIATEV (215 aa). Positions 688–722 are disordered; it reads EEKRRKRLKSDASEKSKYSESRYSESKYSESKYSE. Residues 696 to 722 are compositionally biased toward basic and acidic residues; that stretch reads KSDASEKSKYSESRYSESKYSESKYSE.

As to quaternary structure, interacts with mib. In terms of processing, ubiquitinated by mib, leading to its endocytosis and subsequent degradation. Ubiquitinated by the ECS(ASB11) complex, leading to its degradation by the proteasome. In terms of tissue distribution, expressed in nervous system. In the developing nervous system, it is expressed in overlapping regions with deltaB (dlb) and deltaD (dld); in the neural plate, dla is expressed in patches of contiguous cells with dld, while dlb is confined to scattered cells within those patches that will differentiate as neurons. In 24 hours embryos, expressed in the hindbrain in stripes adjacent to rhombomere boundaries, but not in the actual boundary cells. During gastrulation and tail formation, expressed in embryonic midline cells. Expressed in hair cells of inner ear.

It is found in the membrane. Acts as a ligand for Notch receptors and is involved in primary neurogenesis. Can activate Notch receptors, thereby playing a key role in lateral inhibition, a process that prevents the immediate neighbors of each nascent neural cell from simultaneously embarking on neural differentiation. Required for boundary formation during segmentation of the hindbrain. Required for midline cell fate specification prior to germ layer formation; regulates specification of floorplate, notochord and hypochord. In inner ear, it prevents adjacent cells from adopting the same cell fate. Plays a role in angiogenesis. The polypeptide is Delta-like protein A (dla) (Danio rerio (Zebrafish)).